A 730-amino-acid polypeptide reads, in one-letter code: LisH domain-containing protein ARMC9 (730 aa).

A LisH domain is found at 7-39 (HESELLGLVKEYLDFAEFEDTLKTFSKECKVKG). The stretch at 205–242 (SNNKEMLQQLHQQLLEAERRAMAYLKRYNKMQADYHSL) forms a coiled coil. Ser-583 bears the Phosphoserine mark. Residues 675-730 (QNAQQARNGCPRPIPVAQPDDYKEGKRGVAGRATPSSCKSAECAEPVLSSGAQKPK) are disordered.

In terms of assembly, interacts with TOGARAM1, CCDC66, CEP104, CSPP1 and CEP290. Interacts with NDUFAF2.

Its subcellular location is the cytoplasm. The protein resides in the cytoskeleton. It is found in the cilium basal body. It localises to the cell projection. The protein localises to the cilium. Its subcellular location is the microtubule organizing center. The protein resides in the centrosome. It is found in the centriole. Functionally, involved in ciliogenesis. It is required for appropriate acetylation and polyglutamylation of ciliary microtubules, and regulation of cilium length. Acts as a positive regulator of hedgehog (Hh)signaling. May participate in the trafficking and/or retention of GLI2 and GLI3 proteins at the ciliary tip. This Rattus norvegicus (Rat) protein is LisH domain-containing protein ARMC9 (Armc9).